The primary structure comprises 396 residues: MEQEFVKALPILHHLMKAGHQAYFVGGAVRDSYMKRKIGDVDIATSASPNEVERLFKRTVDVGKEHGTVIVLWEDETYEVTTFRAESEYKDYRRPEAVRFITSLSEDLKRRDLTINAMAMSAEGELLDYFGGAHDIGQKLIRTVGNPEDRFREDALRMMRAVRFMSQLGFLLEKETREAVIKDRELLAHVSVERKTVEFEKLLQGASSQEAIQTMVQTGLIQELPGLSGYEQQMLEASGFPFSSLDAREERWAALLLFLGLCPKSAEAFLKQWKLPGKVIKKAMQIISVYPAQLEAEAMYRAGEALFSAVKIGMLKKHKTIDEQKLKEVQSLYEQLPIKSLRDLDISGADLMELRNRRAGKWVAEELRRIEEAVLAGKLPNRKHDIKEWLASWDQH.

ATP-binding residues include Gly27 and Arg30. CTP is bound by residues Gly27 and Arg30. Mg(2+) is bound by residues Asp40 and Asp42. ATP-binding residues include Arg111, Asp154, Arg157, Arg160, and Arg163. CTP-binding residues include Arg111, Asp154, Arg157, Arg160, and Arg163.

It belongs to the tRNA nucleotidyltransferase/poly(A) polymerase family. Bacterial CCA-adding enzyme type 3 subfamily. Homodimer. It depends on Mg(2+) as a cofactor.

It carries out the reaction a tRNA precursor + 2 CTP + ATP = a tRNA with a 3' CCA end + 3 diphosphate. It catalyses the reaction a tRNA with a 3' CCA end + 2 CTP + ATP = a tRNA with a 3' CCACCA end + 3 diphosphate. Catalyzes the addition and repair of the essential 3'-terminal CCA sequence in tRNAs without using a nucleic acid template. Adds these three nucleotides in the order of C, C, and A to the tRNA nucleotide-73, using CTP and ATP as substrates and producing inorganic pyrophosphate. tRNA 3'-terminal CCA addition is required both for tRNA processing and repair. Also involved in tRNA surveillance by mediating tandem CCA addition to generate a CCACCA at the 3' terminus of unstable tRNAs. While stable tRNAs receive only 3'-terminal CCA, unstable tRNAs are marked with CCACCA and rapidly degraded. The polypeptide is CCA-adding enzyme (Bacillus velezensis (strain DSM 23117 / BGSC 10A6 / LMG 26770 / FZB42) (Bacillus amyloliquefaciens subsp. plantarum)).